The sequence spans 412 residues: Peptidase T (412 aa).

Histidine 84 provides a ligand contact to Zn(2+). Residue aspartate 86 is part of the active site. Aspartate 146 serves as a coordination point for Zn(2+). Glutamate 179 (proton acceptor) is an active-site residue. Zn(2+)-binding residues include glutamate 180, aspartate 202, and histidine 385.

This sequence belongs to the peptidase M20B family. Requires Zn(2+) as cofactor.

It is found in the cytoplasm. It catalyses the reaction Release of the N-terminal residue from a tripeptide.. In terms of biological role, cleaves the N-terminal amino acid of tripeptides. This Haemophilus influenzae (strain PittEE) protein is Peptidase T.